The following is a 1126-amino-acid chain: Replication protein 1a (1126 aa).

A methyltransferase region spans residues 69-406 (SFSLDATQQN…HTIIGGVTLI (338 aa)). In terms of domain architecture, Alphavirus-like MT spans 90–278 (VFSNSSSSSH…HRFSLLKHYL (189 aa)). Residues 806–963 (DQSCVFASAE…HKLTGKVERK (158 aa)) enclose the (+)RNA virus helicase ATP-binding domain. The ATP-dependent helicase stretch occupies residues 834–1094 (TIVDGVAGCG…RHKKTFKYFT (261 aa)). 838-845 (GVAGCGKT) contributes to the ATP binding site. One can recognise a (+)RNA virus helicase C-terminal domain in the interval 964–1125 (LITWRSPADA…SILARSYNHN (162 aa)).

It belongs to the bromoviridae replication protein 1a family. In terms of assembly, interacts with RNA-directed RNA polymerase 2a.

The protein resides in the host endoplasmic reticulum membrane. Functionally, involved in the virus replication. Contains a helicase domain and a methyltransferase domain. The methyltransferase domain is probably involved in viral RNA capping. Involved in the formation of ER membrane spherular invaginations in which RNA replication complexes form. This is Replication protein 1a from Alfalfa mosaic virus (AMV).